We begin with the raw amino-acid sequence, 443 residues long: Thymidine phosphorylase (443 aa).

It belongs to the thymidine/pyrimidine-nucleoside phosphorylase family. Homodimer.

It carries out the reaction thymidine + phosphate = 2-deoxy-alpha-D-ribose 1-phosphate + thymine. It participates in pyrimidine metabolism; dTMP biosynthesis via salvage pathway; dTMP from thymine: step 1/2. In terms of biological role, the enzymes which catalyze the reversible phosphorolysis of pyrimidine nucleosides are involved in the degradation of these compounds and in their utilization as carbon and energy sources, or in the rescue of pyrimidine bases for nucleotide synthesis. This Shewanella loihica (strain ATCC BAA-1088 / PV-4) protein is Thymidine phosphorylase.